The primary structure comprises 328 residues: MNVAVVMGGYSDESVISLRSGQLILNNLDKSKYNIFEVHILLKDWSVVIEGEKYPINKADFSFTKNGVITKFDVAINTVHGTPGEDGHLQSYWELIDIPYTGCNFYQSALTFNKRDTLSVLTKFNIPKAKSIYLRKGDVIDGNEIKKALGLPFFVKPNQSGSSLGVSKVDALDQLEKALEFAFAEDNEILIESYLNGTEVSVGVLNYKGQTKVLGITEILSQNDFFDYEAKYLGKSEEITPARISKEEEILVAESAKKIYNSLGMSGFSRTDFIIMNGIPHFIEINTNPGLSPQSIFPQQAMFAKMDMPQMLDNEITLALSRKPIWKK.

The region spanning Leu118–Thr317 is the ATP-grasp domain. An ATP-binding site is contributed by Lys146–Ser201. Mg(2+) contacts are provided by Asp272, Glu284, and Asn286.

Belongs to the D-alanine--D-alanine ligase family. It depends on Mg(2+) as a cofactor. Requires Mn(2+) as cofactor.

It is found in the cytoplasm. The catalysed reaction is 2 D-alanine + ATP = D-alanyl-D-alanine + ADP + phosphate + H(+). It participates in cell wall biogenesis; peptidoglycan biosynthesis. Its function is as follows. Cell wall formation. The polypeptide is D-alanine--D-alanine ligase (Flavobacterium psychrophilum (strain ATCC 49511 / DSM 21280 / CIP 103535 / JIP02/86)).